The chain runs to 348 residues: Anthranilate phosphoribosyltransferase (348 aa).

5-phospho-alpha-D-ribose 1-diphosphate is bound by residues Gly-81, Gly-84–Asp-85, Asn-91–Thr-94, Lys-109–Gly-117, and Ser-121. Residue Gly-81 participates in anthranilate binding. Ser-93 contacts Mg(2+). Asn-112 serves as a coordination point for anthranilate. Anthranilate is bound at residue Arg-167. Mg(2+) is bound by residues Asp-226 and Glu-227.

This sequence belongs to the anthranilate phosphoribosyltransferase family. As to quaternary structure, homodimer. It depends on Mg(2+) as a cofactor.

It catalyses the reaction N-(5-phospho-beta-D-ribosyl)anthranilate + diphosphate = 5-phospho-alpha-D-ribose 1-diphosphate + anthranilate. The protein operates within amino-acid biosynthesis; L-tryptophan biosynthesis; L-tryptophan from chorismate: step 2/5. Its function is as follows. Catalyzes the transfer of the phosphoribosyl group of 5-phosphorylribose-1-pyrophosphate (PRPP) to anthranilate to yield N-(5'-phosphoribosyl)-anthranilate (PRA). In Stutzerimonas stutzeri (strain A1501) (Pseudomonas stutzeri), this protein is Anthranilate phosphoribosyltransferase.